The following is a 245-amino-acid chain: tRNA pseudouridine synthase A (245 aa).

The Nucleophile role is filled by Asp-52. Tyr-111 is a binding site for substrate.

Belongs to the tRNA pseudouridine synthase TruA family. In terms of assembly, homodimer.

The enzyme catalyses uridine(38/39/40) in tRNA = pseudouridine(38/39/40) in tRNA. Formation of pseudouridine at positions 38, 39 and 40 in the anticodon stem and loop of transfer RNAs. The chain is tRNA pseudouridine synthase A from Rhodopseudomonas palustris (strain HaA2).